We begin with the raw amino-acid sequence, 288 residues long: tRNA dimethylallyltransferase (288 aa).

Gly17 to Ser24 contacts ATP. Thr19 to Ser24 contributes to the substrate binding site.

This sequence belongs to the IPP transferase family. As to quaternary structure, monomer. Mg(2+) is required as a cofactor.

The catalysed reaction is adenosine(37) in tRNA + dimethylallyl diphosphate = N(6)-dimethylallyladenosine(37) in tRNA + diphosphate. In terms of biological role, catalyzes the transfer of a dimethylallyl group onto the adenine at position 37 in tRNAs that read codons beginning with uridine, leading to the formation of N6-(dimethylallyl)adenosine (i(6)A). This chain is tRNA dimethylallyltransferase, found in Ruegeria sp. (strain TM1040) (Silicibacter sp.).